The chain runs to 334 residues: Ketol-acid reductoisomerase (NADP(+)) (334 aa).

Residues 1-181 enclose the KARI N-terminal Rossmann domain; sequence MNRYYDKNAD…GGGRTGILET (181 aa). NADP(+)-binding positions include 24-27, R47, S50, S52, and 82-85; these read YGSQ and DEFQ. H107 is an active-site residue. G133 is a binding site for NADP(+). The KARI C-terminal knotted domain occupies 182–323; sequence SFKDETETDL…ESLRSMMPWI (142 aa). Positions 190, 194, 226, and 230 each coordinate Mg(2+). S251 serves as a coordination point for substrate.

It belongs to the ketol-acid reductoisomerase family. It depends on Mg(2+) as a cofactor.

It catalyses the reaction (2R)-2,3-dihydroxy-3-methylbutanoate + NADP(+) = (2S)-2-acetolactate + NADPH + H(+). It carries out the reaction (2R,3R)-2,3-dihydroxy-3-methylpentanoate + NADP(+) = (S)-2-ethyl-2-hydroxy-3-oxobutanoate + NADPH + H(+). Its pathway is amino-acid biosynthesis; L-isoleucine biosynthesis; L-isoleucine from 2-oxobutanoate: step 2/4. It participates in amino-acid biosynthesis; L-valine biosynthesis; L-valine from pyruvate: step 2/4. Involved in the biosynthesis of branched-chain amino acids (BCAA). Catalyzes an alkyl-migration followed by a ketol-acid reduction of (S)-2-acetolactate (S2AL) to yield (R)-2,3-dihydroxy-isovalerate. In the isomerase reaction, S2AL is rearranged via a Mg-dependent methyl migration to produce 3-hydroxy-3-methyl-2-ketobutyrate (HMKB). In the reductase reaction, this 2-ketoacid undergoes a metal-dependent reduction by NADPH to yield (R)-2,3-dihydroxy-isovalerate. This is Ketol-acid reductoisomerase (NADP(+)) from Ruthia magnifica subsp. Calyptogena magnifica.